A 465-amino-acid chain; its full sequence is Protein dml1 (465 aa).

Ser446 carries the phosphoserine modification.

This sequence belongs to the misato family.

Its subcellular location is the mitochondrion. Involved in the partitioning of the mitochondrial organelle and mitochondrial DNA (mtDNA) inheritance. This chain is Protein dml1 (dml1), found in Schizosaccharomyces pombe (strain 972 / ATCC 24843) (Fission yeast).